We begin with the raw amino-acid sequence, 273 residues long: Dermonecrotic toxin LapSicTox-alphaIB1aiii (273 aa).

His-5 is an active-site residue. Residues Glu-25 and Asp-27 each coordinate Mg(2+). The active-site Nucleophile is His-41. Cystine bridges form between Cys-45/Cys-51 and Cys-47/Cys-190. Residue Asp-85 coordinates Mg(2+). Asn-250 carries an N-linked (GlcNAc...) asparagine glycan.

The protein belongs to the arthropod phospholipase D family. Class II subfamily. The cofactor is Mg(2+). In terms of tissue distribution, expressed by the venom gland.

The protein resides in the secreted. The enzyme catalyses an N-(acyl)-sphingosylphosphocholine = an N-(acyl)-sphingosyl-1,3-cyclic phosphate + choline. It catalyses the reaction an N-(acyl)-sphingosylphosphoethanolamine = an N-(acyl)-sphingosyl-1,3-cyclic phosphate + ethanolamine. It carries out the reaction a 1-acyl-sn-glycero-3-phosphocholine = a 1-acyl-sn-glycero-2,3-cyclic phosphate + choline. The catalysed reaction is a 1-acyl-sn-glycero-3-phosphoethanolamine = a 1-acyl-sn-glycero-2,3-cyclic phosphate + ethanolamine. Dermonecrotic toxins cleave the phosphodiester linkage between the phosphate and headgroup of certain phospholipids (sphingolipid and lysolipid substrates), forming an alcohol (often choline) and a cyclic phosphate. This toxin acts on sphingomyelin (SM). It may also act on ceramide phosphoethanolamine (CPE), lysophosphatidylcholine (LPC) and lysophosphatidylethanolamine (LPE), but not on lysophosphatidylserine (LPS), and lysophosphatidylglycerol (LPG). It acts by transphosphatidylation, releasing exclusively cyclic phosphate products as second products. Induces dermonecrosis, hemolysis, increased vascular permeability, edema, inflammatory response, and platelet aggregation. The chain is Dermonecrotic toxin LapSicTox-alphaIB1aiii from Loxosceles apachea (Apache recluse spider).